The following is a 327-amino-acid chain: Tartrate-resistant acid phosphatase type 5 (327 aa).

A signal peptide spans 1–22 (MDSWVVLLGLQIIWLPLLTHGT). The Fe cation site is built by Asp-35, Asp-73, Tyr-76, and Asn-112. Asn-118 and Asn-149 each carry an N-linked (GlcNAc...) asparagine glycan. Cys-163 and Cys-221 are disulfide-bonded. Fe cation-binding residues include His-207, His-242, and His-244.

Exists either as monomer or, after proteolytic processing, as a dimer of two chains linked by disulfide bond(s). Fe cation serves as cofactor. Characteristic constituent of osteoclasts.

It is found in the lysosome. The catalysed reaction is a phosphate monoester + H2O = an alcohol + phosphate. Functionally, may play a role in the process of bone resorption. The osteoclastic trap acts on nucleotide tri- and diphosphates with higher affinity, compared with other substrates. The sequence is that of Tartrate-resistant acid phosphatase type 5 (Acp5) from Mus musculus (Mouse).